Reading from the N-terminus, the 394-residue chain is GDSL esterase/lipase At2g27360 (394 aa).

Residues 1-24 (MASQDCHMLLSFFISTFLITVVTS) form the signal peptide. The Nucleophile role is filled by Ser-40. Residues Asn-136 and Asn-319 are each glycosylated (N-linked (GlcNAc...) asparagine). Residues Asp-344 and His-347 contribute to the active site. Residues Asn-371 and Asn-382 are each glycosylated (N-linked (GlcNAc...) asparagine).

Belongs to the 'GDSL' lipolytic enzyme family.

It is found in the secreted. In Arabidopsis thaliana (Mouse-ear cress), this protein is GDSL esterase/lipase At2g27360.